Consider the following 202-residue polypeptide: NAD(P)H-quinone oxidoreductase subunit I (202 aa).

4Fe-4S ferredoxin-type domains lie at G55–V84 and K95–E124. [4Fe-4S] cluster is bound by residues C64, C67, C70, C74, C104, C107, C110, and C114. The span at E168–E187 shows a compositional bias: basic and acidic residues. A disordered region spans residues E168–N202.

Belongs to the complex I 23 kDa subunit family. NDH-1 is composed of at least 11 different subunits. [4Fe-4S] cluster serves as cofactor.

It localises to the cellular thylakoid membrane. The catalysed reaction is a plastoquinone + NADH + (n+1) H(+)(in) = a plastoquinol + NAD(+) + n H(+)(out). The enzyme catalyses a plastoquinone + NADPH + (n+1) H(+)(in) = a plastoquinol + NADP(+) + n H(+)(out). Its function is as follows. NDH-1 shuttles electrons from an unknown electron donor, via FMN and iron-sulfur (Fe-S) centers, to quinones in the respiratory and/or the photosynthetic chain. The immediate electron acceptor for the enzyme in this species is believed to be plastoquinone. Couples the redox reaction to proton translocation, and thus conserves the redox energy in a proton gradient. The chain is NAD(P)H-quinone oxidoreductase subunit I from Synechococcus elongatus (strain ATCC 33912 / PCC 7942 / FACHB-805) (Anacystis nidulans R2).